A 601-amino-acid chain; its full sequence is Glutathione-regulated potassium-efflux system protein KefB (601 aa).

The next 13 membrane-spanning stretches (helical) occupy residues 4–24, 29–49, 55–75, 87–107, 111–131, 152–172, 177–197, 207–227, 230–250, 262–282, 284–304, 324–344, and 356–376; these read ADLL…VPLA, IGAV…GLGF, EILH…GLEL, IFGV…GLLM, FLWQ…TAMA, VLLF…LLAG, HFDW…LIGG, FIAA…LVLS, LFMD…GVLL, AIDP…GMSL, LGVL…LVVI, MQFA…FSTA, and ALLL…MKGI. An RCK N-terminal domain is found at 400–519; sequence KPQVIVVGFG…AGVTQFSRET (120 aa).

The protein belongs to the monovalent cation:proton antiporter 2 (CPA2) transporter (TC 2.A.37) family. KefB subfamily. Interacts with the regulatory subunit KefG.

It is found in the cell inner membrane. In terms of biological role, pore-forming subunit of a potassium efflux system that confers protection against electrophiles. Catalyzes K(+)/H(+) antiport. The chain is Glutathione-regulated potassium-efflux system protein KefB from Salmonella paratyphi C (strain RKS4594).